The following is a 325-amino-acid chain: Tetraacyldisaccharide 4'-kinase (325 aa).

55 to 62 (TAGGNGKT) serves as a coordination point for ATP.

The protein belongs to the LpxK family.

It catalyses the reaction a lipid A disaccharide + ATP = a lipid IVA + ADP + H(+). Its pathway is glycolipid biosynthesis; lipid IV(A) biosynthesis; lipid IV(A) from (3R)-3-hydroxytetradecanoyl-[acyl-carrier-protein] and UDP-N-acetyl-alpha-D-glucosamine: step 6/6. Its function is as follows. Transfers the gamma-phosphate of ATP to the 4'-position of a tetraacyldisaccharide 1-phosphate intermediate (termed DS-1-P) to form tetraacyldisaccharide 1,4'-bis-phosphate (lipid IVA). The sequence is that of Tetraacyldisaccharide 4'-kinase from Salmonella newport (strain SL254).